A 138-amino-acid chain; its full sequence is Secreted RxLR effector protein 51 (138 aa).

An N-terminal signal peptide occupies residues 1 to 19 (MRSSTILFVLGVAMVAVNG). Positions 38–53 (RLLRSNSGKHKTDEER) match the RxLR-dEER motif. The N-linked (GlcNAc...) asparagine glycan is linked to Asn101.

This sequence belongs to the RxLR effector family.

It is found in the secreted. Its subcellular location is the host nucleus. Functionally, secreted effector that completely suppresses the host cell death induced by cell death-inducing proteins. The protein is Secreted RxLR effector protein 51 of Plasmopara viticola (Downy mildew of grapevine).